The chain runs to 639 residues: Probable serine/threonine-protein kinase DDB_G0282777 (639 aa).

The stretch at 7–122 (LKENKESLKD…EDLKSIILTS (116 aa)) forms a coiled coil. Positions 233–588 (MHMVGDIKKG…SNNNQNHTNI (356 aa)) constitute a Protein kinase domain. ATP-binding positions include 239–247 (IKKGSISSD) and K284. Residue D439 is the Proton acceptor of the active site. The segment at 601 to 639 (NTLETSTTNPNTNTTTSDTNTSTTSTTNTNTTTSNTITA) is disordered.

This sequence belongs to the protein kinase superfamily. Ser/Thr protein kinase family.

It carries out the reaction L-seryl-[protein] + ATP = O-phospho-L-seryl-[protein] + ADP + H(+). It catalyses the reaction L-threonyl-[protein] + ATP = O-phospho-L-threonyl-[protein] + ADP + H(+). In Dictyostelium discoideum (Social amoeba), this protein is Probable serine/threonine-protein kinase DDB_G0282777.